The chain runs to 261 residues: Hydroxyethylthiazole kinase (261 aa).

Methionine 38 is a substrate binding site. Residues arginine 114 and threonine 159 each contribute to the ATP site. Residue glycine 186 coordinates substrate.

This sequence belongs to the Thz kinase family. It depends on Mg(2+) as a cofactor.

The enzyme catalyses 5-(2-hydroxyethyl)-4-methylthiazole + ATP = 4-methyl-5-(2-phosphooxyethyl)-thiazole + ADP + H(+). It participates in cofactor biosynthesis; thiamine diphosphate biosynthesis; 4-methyl-5-(2-phosphoethyl)-thiazole from 5-(2-hydroxyethyl)-4-methylthiazole: step 1/1. Its function is as follows. Catalyzes the phosphorylation of the hydroxyl group of 4-methyl-5-beta-hydroxyethylthiazole (THZ). This is Hydroxyethylthiazole kinase from Halalkalibacterium halodurans (strain ATCC BAA-125 / DSM 18197 / FERM 7344 / JCM 9153 / C-125) (Bacillus halodurans).